A 516-amino-acid polypeptide reads, in one-letter code: GMP synthase [glutamine-hydrolyzing] (516 aa).

Residues 8–198 (KILILDFGSQ…VVNICGCDTL (191 aa)) form the Glutamine amidotransferase type-1 domain. Cys84 acts as the Nucleophile in catalysis. Residues His172 and Glu174 contribute to the active site. A GMPS ATP-PPase domain is found at 199–391 (WNIENIIEND…LGLPYNMLYR (193 aa)). ATP is bound at residue 226 to 232 (SGGVDSS).

In terms of assembly, homodimer.

It carries out the reaction XMP + L-glutamine + ATP + H2O = GMP + L-glutamate + AMP + diphosphate + 2 H(+). The protein operates within purine metabolism; GMP biosynthesis; GMP from XMP (L-Gln route): step 1/1. In terms of biological role, catalyzes the synthesis of GMP from XMP. In Francisella tularensis subsp. holarctica (strain LVS), this protein is GMP synthase [glutamine-hydrolyzing].